A 256-amino-acid polypeptide reads, in one-letter code: Glycerol-3-phosphate acyltransferase (256 aa).

6 helical membrane-spanning segments follow: residues 2 to 22 (FPYL…SVLW), 58 to 78 (LAVA…AIGL), 90 to 110 (SYFI…WFKF), 123 to 143 (LIVV…IFAF), 153 to 173 (IIGT…GVMG), and 211 to 231 (FADG…ILVV).

Belongs to the PlsY family. As to quaternary structure, probably interacts with PlsX.

The protein localises to the cell membrane. The catalysed reaction is an acyl phosphate + sn-glycerol 3-phosphate = a 1-acyl-sn-glycero-3-phosphate + phosphate. It participates in lipid metabolism; phospholipid metabolism. Catalyzes the transfer of an acyl group from acyl-phosphate (acyl-PO(4)) to glycerol-3-phosphate (G3P) to form lysophosphatidic acid (LPA). This enzyme utilizes acyl-phosphate as fatty acyl donor, but not acyl-CoA or acyl-ACP. In Mesoplasma florum (strain ATCC 33453 / NBRC 100688 / NCTC 11704 / L1) (Acholeplasma florum), this protein is Glycerol-3-phosphate acyltransferase.